We begin with the raw amino-acid sequence, 394 residues long: Exodeoxyribonuclease 7 large subunit (394 aa).

Belongs to the XseA family. Heterooligomer composed of large and small subunits.

Its subcellular location is the cytoplasm. It catalyses the reaction Exonucleolytic cleavage in either 5'- to 3'- or 3'- to 5'-direction to yield nucleoside 5'-phosphates.. In terms of biological role, bidirectionally degrades single-stranded DNA into large acid-insoluble oligonucleotides, which are then degraded further into small acid-soluble oligonucleotides. In Thermotoga sp. (strain RQ2), this protein is Exodeoxyribonuclease 7 large subunit.